Consider the following 312-residue polypeptide: MAQPELDLSKAPAHWGMNFTETTHQQPSRSIDPSNVTFPQGYTVVVIGAGKGIGEHIAKAYVQARAENIIITSRTGSDLDRVKKELETLAQQTGQAVKVSTLVQDATKPESYTKLKDLLEEGFNGRLDTLVFCAGGGPVGTLWTPRIDETDVDEWNESIALNFTGSYYAAKYLVPLMLRPQSQGKTIVNITSAASHFTGGNITPASYSIGKLALNRFTQILGENYADQGLVVVAVHPGSSPTPGALGSMPPSLHNILTDDQGLCGAVCVWISKKKREWISGRYICATWDMDELESKKEEIVKEDKLKWRMAV.

Residues Val-46, Ile-47, Lys-171, Tyr-207, Lys-211, and Thr-242 each coordinate NADP(+). Tyr-207 functions as the Proton donor in the catalytic mechanism. Lys-211 functions as the Lowers pKa of active site Tyr in the catalytic mechanism.

The protein belongs to the short-chain dehydrogenases/reductases (SDR) family.

It functions in the pathway pigment biosynthesis. Its pathway is secondary metabolite biosynthesis. Functionally, short chain dehydrogenase; part of the gene cluster that mediates the biosynthesis of pleosporalin A, ascomycone A, as well as a third cryptic naphthoquinone derived pigment, all responsible for the coloration of conidia. Essential for the production of pleosporalin A, but not the 2 other final products. The pathway begins with the biosynthesis of the cyclized heptaketide 3-acetonyl-1,6,8-trihydroxy-2-naphthaldehyde by the NR-PKS pgmA. The C-6 hydroxyl group is further methylated by the O-methyltransferase pgmB to yield fusarubinaldehyde which is in turn oxidized by the cytochrome P450 monooxygenase pgmC at C-9. The C-1 hydroxyl group is then methylated spontaneously. Although pgmE, pgmD and pgmH are essential for the production of pleosporalin A, it is not the case for the 2 other final products and it remains difficult to assign a specific function to each enzyme. PgmF and pgmG seem not to be involved in pigment biosynthesis although they were regulated by the cluster-specific transcription factor pgmR. This is Short chain dehydrogenase pgmD from Aspergillus terreus.